We begin with the raw amino-acid sequence, 486 residues long: MILHCPVSLSLSFHLNLRTSRIGNIGVTRVNASQRNHSKKLTKNLRNPRRTKLPPDFGVNLFLRKPKIEPLVIDDDDEQVQESVNDDDDAVVWEPEEIEAISSLFQKRIPQKPDKPSRVRPLPLPQPHKLRPLGLPTPKKNIIRSPALSSVSKQVYKDPSFLIGLAREIKSLPSSDADVSLVLNKWVSFLRKGSLSTTIRELGHMGLPERALQTYHWAEKHSHLVPDNRILASTIQVLAKHHELKLLKFDNSLASKNVIEAMIKGCIEGGWLNLARKLILISKSNNRILDSSVYVKMILEIAKNPDKYHLVVALLEELKKREDLKLSQQDCTSIMKICVKLGEFELVESLFDWFKASNREPSVVMYTTMIHSRYSEQKYREAMSVVWEMEESNCLLDLPAYRVVIKLFVALDDLGRAMRYYSKLKEAGFSPTYDIYRDMISVYTASGRLTKCKEICKEVEDAGLRLDKDTSFRLLQLEKQTMSLLH.

The tract at residues 111-137 (QKPDKPSRVRPLPLPQPHKLRPLGLPT) is disordered. 5 PPR repeats span residues 290 to 321 (DSSV…LKKR), 327 to 361 (SQQD…NREP), 362 to 396 (SVVM…NCLL), 397 to 431 (DLPA…GFSP), and 432 to 466 (TYDI…GLRL).

It belongs to the PPR family. P subfamily.

The protein is Pentatricopeptide repeat-containing protein At2g01860 (EMB975) of Arabidopsis thaliana (Mouse-ear cress).